Here is an 834-residue protein sequence, read N- to C-terminus: Protein kintoun (834 aa).

Disordered regions lie at residues 214–239 (TAEE…KQEP), 374–415 (SRED…SVAP), 547–669 (KGKV…STGR), and 759–834 (KKNQ…EMDD). Ser-378 is subject to Phosphoserine. Residues 389-398 (PVEEDPDGEL) are compositionally biased toward acidic residues. The span at 552-571 (AKKDNAPLDVKFERNQEGHA) shows a compositional bias: basic and acidic residues. A compositionally biased stretch (acidic residues) spans 582–596 (EEEEDKENQDQEPES). The segment covering 597-607 (DQQQQQQVQNK) has biased composition (low complexity). 2 stretches are compositionally biased toward basic residues: residues 608–619 (KPGKKQRKKNKK) and 759–773 (KKNQ…RAQQ). A Phosphoserine modification is found at Ser-777. Basic and acidic residues predominate over residues 785 to 798 (EETRGSALKQEENP).

The protein belongs to the PIH1 family. Kintoun subfamily. As to quaternary structure, interacts with Pp1alpha-96A, Pp1-87B, Pp1-13C and flw.

Its subcellular location is the cytoplasm. Required for cytoplasmic pre-assembly of axonemal dyneins, thereby playing a central role in motility in cilia and flagella. Involved in pre-assembly of dynein arm complexes in the cytoplasm before intraflagellar transport loads them for the ciliary compartment. The protein is Protein kintoun of Drosophila melanogaster (Fruit fly).